Here is a 331-residue protein sequence, read N- to C-terminus: tRNA-cytidine(32) 2-sulfurtransferase (331 aa).

Positions 1–33 are disordered; it reads MNAPHMNDTAADAATLDDAAAPAGRPALTRREQ. A compositionally biased stretch (low complexity) spans 8-23; that stretch reads DTAADAATLDDAAAPA. The PP-loop motif signature appears at 71–76; it reads SGGKDS. [4Fe-4S] cluster-binding residues include Cys-146, Cys-149, and Cys-237.

It belongs to the TtcA family. Homodimer. Mg(2+) serves as cofactor. [4Fe-4S] cluster is required as a cofactor.

Its subcellular location is the cytoplasm. It catalyses the reaction cytidine(32) in tRNA + S-sulfanyl-L-cysteinyl-[cysteine desulfurase] + AH2 + ATP = 2-thiocytidine(32) in tRNA + L-cysteinyl-[cysteine desulfurase] + A + AMP + diphosphate + H(+). It participates in tRNA modification. Functionally, catalyzes the ATP-dependent 2-thiolation of cytidine in position 32 of tRNA, to form 2-thiocytidine (s(2)C32). The sulfur atoms are provided by the cysteine/cysteine desulfurase (IscS) system. This Burkholderia cenocepacia (strain HI2424) protein is tRNA-cytidine(32) 2-sulfurtransferase.